Reading from the N-terminus, the 284-residue chain is Methylglyoxal reductase YeaE (284 aa).

The protein belongs to the aldo/keto reductase family.

It catalyses the reaction hydroxyacetone + NADP(+) = methylglyoxal + NADPH + H(+). It carries out the reaction a primary alcohol + NADP(+) = an aldehyde + NADPH + H(+). Its function is as follows. Aldo-keto reductase that contributes to cellular methylglyoxal detoxification by catalyzing the NADPH-dependent conversion of methylglyoxal to acetol. It also exhibits activity with glyoxal and probably plays a significant role in detoxification of glyoxal in vivo. Can also use aromatic aldehydes such as 4-nitrobenzaldehyde, 3-nitrobenzaldehyde and benzaldehyde, and phenylglyoxal. This chain is Methylglyoxal reductase YeaE (yeaE), found in Escherichia coli (strain K12).